A 1336-amino-acid chain; its full sequence is MATEIGSPPRFFHMPRFQHQAPRQLFYKRPDFAQQQAMQQLTFDGKRMRKAVNRKTIDYNPSVIKYLENRIWQRDQRDMRAIQPDAGYYNDLVPPIGMLNNPMNAVTTKFVRTSTNKVKCPVFVVRWTPEGRRLVTGASSGEFTLWNGLTFNFETILQAHDSPVRAMTWSHNDMWMLTADHGGYVKYWQSNMNNVKMFQAHKEAIREASFSPTDNKFATCSDDGTVRIWDFLRCHEERILRGHGADVKCVDWHPTKGLVVSGSKDSQQPIKFWDPKTGQSLATLHAHKNTVMEVKLNLNGNWLLTASRDHLCKLFDIRNLKEELQVFRGHKKEATAVAWHPVHEGLFASGGSDGSLLFWHVGVEKEVGGMEMAHEGMIWSLAWHPLGHILCSGSNDHTSKFWTRNRPGDKMRDRYNLNLLPGMSEDGVEYDDLEPNSLAVIPGMGIPEQLKLAMEQEQMGKDESNEIEMTIPGLDWGMEEVMQKDQKKVPQKKVPYAKPIPAQFQQAWMQNKVPIPAPNEVLNDRKEDIKLEEKKKTQAEIEQEMATLQYTNPQLLEQLKIERLAQKQVEQIQPPPSSGTPLLGPQPFPGQGPMSQIPQGFQQPHPSQQMPMNMAQMGPPGPQGQFRPPGPQGQMGPQGPPLHQGGGGPQGFMGPQGPQGPPQGLPRPQDMHGPQGMQRHPGPHGPLGPQGPPGPQGSSGPQGHMGPQGPPGPQGHIGPQGPPGPQGHLGPQGPPGTQGMQGPPGPRGMQGPPHPHGIQGGPGSQGIQGPVSQGPLMGLNPRGMQGPPGPRENQGPAPQGMIMGHPPQEMRGPHPPGGLLGHGPQEMRGPQEIRGMQGPPPQGSMLGPPQELRGPPGSQSQQGPPQGSLGPPPQGGMQGPPGPQGQQNPARGPHPSQGPIPFQQQKTPLLGDGPRAPFNQEGQSTGPPPLIPGLGQQGAQGRIPPLNPGQGPGPNKGDSRGPPNHHMGPMSERRHEQSGGPEHGPERGPFRGGQDCRGPPDRRGPHPDFPDDFSRPDDFHPDKRFGHRLREFEGRGGPLPQEEKWRRGGPGPPFPPDHREFSEGDGRGAARGPPGAWEGRRPGDERFPRDPEDPRFRGRREESFRRGAPPRHEGRAPPRGRDGFPGPEDFGPEENFDASEEAARGRDLRGRGRGTPRGGRKGLLPTPDEFPRFEGGRKPDSWDGNREPGPGHEHFRDTPRPDHPPHDGHSPASRERSSSLQGMDMASLPPRKRPWHDGPGTSEHREMEAPGGPSEDRGGKGRGGPGPAQRVPKSGRSSSLDGEHHDGYHRDEPFGGPPGSGTPSRGGRSGSNWGRGSNMNSGPPRRGASRGGGRGR.

Ala-2 bears the N-acetylalanine mark. Residue Ser-7 is modified to Phosphoserine. N6-acetyllysine is present on Lys-46. WD repeat units follow at residues 117–156 (KVKC…FETI), 159–198 (AHDS…VKMF), 200–239 (AHKE…EERI), 242–283 (GHGA…SLAT), 286–325 (AHKN…EELQ), 329–369 (GHKK…EVGG), and 373–412 (AHEG…DKMR). Glycyl lysine isopeptide (Lys-Gly) (interchain with G-Cter in SUMO2) cross-links involve residues Lys-526, Lys-530, and Lys-560. Residues 568–1336 (QVEQIQPPPS…GASRGGGRGR (769 aa)) are disordered. Residues 573 to 590 (QPPPSSGTPLLGPQPFPG) show a composition bias toward pro residues. The span at 594-607 (MSQIPQGFQQPHPS) shows a compositional bias: polar residues. Low complexity predominate over residues 608–643 (QQMPMNMAQMGPPGPQGQFRPPGPQGQMGPQGPPLH). Residues 618-770 (GPPGPQGQFR…GPGSQGIQGP (153 aa)) form the Collagen-like domain. The span at 683 to 695 (PHGPLGPQGPPGP) shows a compositional bias: pro residues. Composition is skewed to low complexity over residues 696-707 (QGSSGPQGHMGP) and 726-751 (QGHL…GMQG). Arg-782 carries the omega-N-methylarginine modification. The segment covering 854–869 (GPPGSQSQQGPPQGSL) has biased composition (low complexity). Arg-915 is subject to Asymmetric dimethylarginine. Low complexity predominate over residues 932–941 (PGLGQQGAQG). 2 stretches are compositionally biased toward basic and acidic residues: residues 971–989 (SERR…ERGP) and 998–1034 (GPPD…EFEG). Arg-987 carries the omega-N-methylarginine modification. At Arg-1035 the chain carries Omega-N-methylarginine. Basic and acidic residues-rich tracts occupy residues 1056-1068 (PDHR…DGRG) and 1078-1122 (EGRR…RGRD). A compositionally biased stretch (acidic residues) spans 1130–1140 (FGPEENFDASE). The segment covering 1141–1150 (EAARGRDLRG) has biased composition (basic and acidic residues). Basic residues predominate over residues 1151-1160 (RGRGTPRGGR). Basic and acidic residues-rich tracts occupy residues 1169 to 1217 (EFPR…RERS) and 1242 to 1259 (SEHR…DRGG). Ser-1210 carries the phosphoserine modification. Residue Arg-1262 is modified to Omega-N-methylarginine. The segment covering 1281-1293 (DGEHHDGYHRDEP) has biased composition (basic and acidic residues). Over residues 1301–1326 (GTPSRGGRSGSNWGRGSNMNSGPPRR) the composition is skewed to low complexity. Position 1315 is an asymmetric dimethylarginine; alternate (Arg-1315). Position 1315 is an omega-N-methylarginine; alternate (Arg-1315).

This sequence belongs to the WD repeat WDR33 family. Component of the cleavage and polyadenylation specificity factor (CPSF) module of the pre-mRNA 3'-end processing complex. Interacts with CPSF3/CPSF73. In terms of tissue distribution, most highly expressed in testis.

The protein resides in the nucleus. Functionally, essential for both cleavage and polyadenylation of pre-mRNA 3' ends. This is pre-mRNA 3' end processing protein WDR33 (WDR33) from Homo sapiens (Human).